Reading from the N-terminus, the 334-residue chain is N-acetyl-gamma-glutamyl-phosphate reductase (334 aa).

The active site involves Cys-154.

It belongs to the NAGSA dehydrogenase family. Type 1 subfamily.

It is found in the cytoplasm. The catalysed reaction is N-acetyl-L-glutamate 5-semialdehyde + phosphate + NADP(+) = N-acetyl-L-glutamyl 5-phosphate + NADPH + H(+). It participates in amino-acid biosynthesis; L-arginine biosynthesis; N(2)-acetyl-L-ornithine from L-glutamate: step 3/4. Functionally, catalyzes the NADPH-dependent reduction of N-acetyl-5-glutamyl phosphate to yield N-acetyl-L-glutamate 5-semialdehyde. The chain is N-acetyl-gamma-glutamyl-phosphate reductase from Pectobacterium carotovorum subsp. carotovorum (strain PC1).